Consider the following 321-residue polypeptide: Probable arabinan endo-1,5-alpha-L-arabinosidase C (321 aa).

Positions methionine 1–alanine 18 are cleaved as a signal peptide. Catalysis depends on aspartate 33, which acts as the Proton acceptor. An N-linked (GlcNAc...) asparagine glycan is attached at asparagine 192. Glutamate 200 acts as the Proton donor in catalysis. Asparagine 224 is a glycosylation site (N-linked (GlcNAc...) asparagine).

This sequence belongs to the glycosyl hydrolase 43 family.

The protein resides in the secreted. It catalyses the reaction Endohydrolysis of (1-&gt;5)-alpha-arabinofuranosidic linkages in (1-&gt;5)-arabinans.. It participates in glycan metabolism; L-arabinan degradation. Functionally, endo-1,5-alpha-L-arabinanase involved in degradation of pectin. Its preferred substrate is linear 1,5-alpha-L-arabinan. In Aspergillus fumigatus (strain CBS 144.89 / FGSC A1163 / CEA10) (Neosartorya fumigata), this protein is Probable arabinan endo-1,5-alpha-L-arabinosidase C (abnC).